Here is a 1163-residue protein sequence, read N- to C-terminus: Voltage-gated inwardly rectifying potassium channel KCNH2 (1163 aa).

The Cytoplasmic portion of the chain corresponds to 1 to 405 (MPVRRGHVAP…RIHRWTILHY (405 aa)). The 72-residue stretch at 17–88 (TIIRKFEGQS…AAQIAQALLG (72 aa)) folds into the PAS domain. Positions 92-144 (RKVEIAFYRKDGSCFLCLVDVVPVKNEDGAVIMFILNFEVVMEKDMVGSPAHD) constitute a PAC domain. The interval 235–286 (VGPASASPVASIPGPHPSPRAQSLNPDASGSSCSLARTRSRESCASVRRASS) is disordered. 2 positions are modified to phosphoserine: Ser-239 and Ser-245. Polar residues predominate over residues 254–271 (RAQSLNPDASGSSCSLAR). Phosphoserine is present on residues Ser-285, Ser-286, Ser-322, and Ser-353. Residues 406–426 (SPFKAVWDWLILLLVIYTAVF) traverse the membrane as a helical segment. The Extracellular portion of the chain corresponds to 427 to 452 (TPYSAAFLLKETEDGSQAPDCGYACQ). Residues 453–473 (PLAVVDLLVDIMFIVDILINF) traverse the membrane as a helical segment. At 474 to 497 (RTTYVNANEEVVSHPGRIAVHYFK) the chain is on the cytoplasmic side. Residues 498 to 518 (GWFLIDMVAAIPFDLLIFGSG) form a helical membrane-spanning segment. Residues 519 to 522 (SEEL) lie on the Extracellular side of the membrane. Residues 523–543 (IGLLKTARLLRLVRVARKLDR) traverse the membrane as a helical; Voltage-sensor segment. Over 544 to 549 (YSEYGA) the chain is Cytoplasmic. Residues 550–570 (AVLFLLMCTFALIAHWLACIW) traverse the membrane as a helical segment. Residues 571-613 (YAIGNMEQPHMDSHIGWLHNLGDQIGKPYNSSGLGGPSIKDKY) are Extracellular-facing. Asn-600 carries an N-linked (GlcNAc...) asparagine glycan. The segment at residues 614-634 (VTALYFTFSSLTSVGFGNVSP) is an intramembrane region (pore-forming). The Selectivity filter signature appears at 626 to 631 (SVGFGN). The Extracellular segment spans residues 635-640 (NTNSEK). The chain crosses the membrane as a helical span at residues 641–661 (IFSICVMLIGSLMYASIFGNV). The Cytoplasmic segment spans residues 662 to 1163 (SAIIQRLYSG…LHRHGSDPGS (502 aa)). Positions 744 to 844 (PFRGATKGCL…IHRDDLLEVL (101 aa)) are cNMP-binding domain. 2 positions are modified to phosphoserine: Ser-873 and Ser-876. Disordered stretches follow at residues 873-992 (SPSS…NPLS), 1015-1043 (ELPR…GDVE), and 1126-1163 (AGAP…DPGS). Over residues 885–894 (RQRKRKLSFR) the composition is skewed to basic residues. Residues 932–943 (GESPSSGPSSPE) show a composition bias toward low complexity. The residue at position 1018 (Arg-1018) is an Omega-N-methylarginine. Residues 1039 to 1066 (RGDVESRLDALQRQLNRLETRLSADMAT) adopt a coiled-coil conformation. The residue at position 1141 (Ser-1141) is a Phosphoserine.

It belongs to the potassium channel family. H (Eag) (TC 1.A.1.20) subfamily. Kv11.1/KCNH2 sub-subfamily. The potassium channel is probably composed of a homo- or heterotetrameric complex of pore-forming alpha subunits that can associate with modulating beta subunits. Interacts with DNAJB12 and DNAJB14; chaperones DNAJB12 and DNAJB14 promote tetramerization. Heteromultimer with KCNH6/ERG2 and KCNH7/ERG3. Interacts with ALG10B. Forms a stable complex with KCNE1 or KCNE2, and that this heteromultimerization regulates Inward rectifier potassium channel activity. Interacts with CANX. The core-glycosylated, but not the fully glycosylated form interacts with RNF207. Interacts with NDFIP1 and NDFIP2; this interaction decreases the cell membrane expression by targeting KCNH2, through interaction with NEDD4L, for the degradation through the multivesicular bodies (MVBs)-lysosomal pathway. Phosphorylated on serine and threonine residues. Phosphorylation by PKA inhibits ion conduction. In terms of tissue distribution, highly expressed in brain and testis, slightly less so in heart, adrenal, retina and thymus. Detected at lower levels in lung, soleus, tibialis, and at very low levels in cornea and lens. A shorter transcript is detected in skeletal muscle. Found in pituitary.

It localises to the cell membrane. It carries out the reaction K(+)(in) = K(+)(out). Functionally, pore-forming (alpha) subunit of voltage-gated inwardly rectifying potassium channel. Characterized by unusual gating kinetics by producing relatively small outward currents during membrane depolarization and large inward currents during subsequent repolarization which reflect a rapid inactivation during depolarization and quick recovery from inactivation but slow deactivation (closing) during repolarization. Channel properties are modulated by cAMP and subunit assembly. Forms a stable complex with KCNE1 or KCNE2, and that this heteromultimerization regulates inward rectifier potassium channel activity. The polypeptide is Voltage-gated inwardly rectifying potassium channel KCNH2 (Rattus norvegicus (Rat)).